Consider the following 422-residue polypeptide: UDP-N-acetylglucosamine 1-carboxyvinyltransferase (422 aa).

Position 22-23 (22-23 (KN)) interacts with phosphoenolpyruvate. Arg93 contacts UDP-N-acetyl-alpha-D-glucosamine. Cys117 serves as the catalytic Proton donor. Cys117 is subject to 2-(S-cysteinyl)pyruvic acid O-phosphothioketal. Residues 122–126 (RPVDL), Asp308, and Leu330 contribute to the UDP-N-acetyl-alpha-D-glucosamine site.

This sequence belongs to the EPSP synthase family. MurA subfamily.

The protein resides in the cytoplasm. The catalysed reaction is phosphoenolpyruvate + UDP-N-acetyl-alpha-D-glucosamine = UDP-N-acetyl-3-O-(1-carboxyvinyl)-alpha-D-glucosamine + phosphate. The protein operates within cell wall biogenesis; peptidoglycan biosynthesis. Its function is as follows. Cell wall formation. Adds enolpyruvyl to UDP-N-acetylglucosamine. In Helicobacter pylori (strain ATCC 700392 / 26695) (Campylobacter pylori), this protein is UDP-N-acetylglucosamine 1-carboxyvinyltransferase.